The sequence spans 161 residues: UPF0225 protein NTHI0386 (161 aa).

This sequence belongs to the UPF0225 family.

The chain is UPF0225 protein NTHI0386 from Haemophilus influenzae (strain 86-028NP).